The sequence spans 309 residues: Dioxygenase af480 (309 aa).

Positions 153, 155, and 228 each coordinate Fe cation.

The protein belongs to the PhyH family. The cofactor is Fe cation.

The catalysed reaction is 5-dehydro-6-demethoxyfumagillol + 2-oxoglutarate + O2 = 5-dehydro-6-demethoxy-6-hydroxyfumagillol + succinate + CO2. The protein operates within secondary metabolite biosynthesis; terpenoid biosynthesis. Functionally, dioxygenase; part of the gene cluster that mediates the biosynthesis of fumagillin, a meroterpenoid that has numerous biological activities including irreversible inhibition of human type 2 methionine aminopeptidase (METAP2). Within the pathway, the dioxygenase af480 acts as a 5-dehydro-6-demethoxyfumagillol dioxygenase that hydroylates 5-keto-demethoxyfumagillol at position C-6. The pathway begins with the conversion of farnesyl pyrophosphate (FPP) to beta-trans-bergamotene by the membrane-bound beta-trans-bergamotene synthase af520. The multifunctional cytochrome P450 monooxygenase af510 then converts beta-trans-bergamotene into 5-keto-demethoxyfumagillol via several oxydation steps. 5-keto-demethoxyfumagillol is then subjected to successive C-6 hydroxylation and O-methylation by the dioxygenase af480 and O-methyltransferase af390-400, respectively, to yield 5-keto-fumagillol, which is then stereoselectively reduced by the keto-reductase af490 to 5R-hydroxy-seco-sesquiterpene. The next step is the polyketide transferase af380-catalyzed transfer of a dodecapentaenoyl group synthesized by the polyketide synthase af370 onto 5R-hydroxy-seco-sesquiterpene which leads to the production of prefumagillin. Finally, oxidative cleavage by the monooxygenase af470 converts prefumagillin to fumagillin. The protein is Dioxygenase af480 of Aspergillus fumigatus (strain ATCC MYA-4609 / CBS 101355 / FGSC A1100 / Af293) (Neosartorya fumigata).